The following is a 460-amino-acid chain: tRNA (guanine(10)-N(2))-methyltransferase TRMT11 (460 aa).

Ala2 is subject to N-acetylalanine.

This sequence belongs to the class I-like SAM-binding methyltransferase superfamily. TRM11 methyltransferase family. In terms of assembly, part of the heterodimeric TRMT11-TRM112 methyltransferase complex; this complex forms an active tRNA methyltransferase, where TRMT112 acts as an activator of the catalytic subunit TRMT11.

The protein resides in the cytoplasm. It carries out the reaction guanosine(10) in tRNA + S-adenosyl-L-methionine = N(2)-methylguanosine(10) in tRNA + S-adenosyl-L-homocysteine + H(+). Its function is as follows. Catalytic subunit of the TRMT11-TRM112 methyltransferase complex, that specifically mediates the S-adenosyl-L-methionine-dependent N(2)-methylation of guanosine nucleotide at position 10 (m2G10) in tRNAs. This is one of the major tRNA (guanine-N(2))-methyltransferases. The polypeptide is tRNA (guanine(10)-N(2))-methyltransferase TRMT11 (Bos taurus (Bovine)).